Reading from the N-terminus, the 400-residue chain is Tryptophan synthase beta chain (400 aa).

K92 carries the N6-(pyridoxal phosphate)lysine modification.

It belongs to the TrpB family. In terms of assembly, tetramer of two alpha and two beta chains. Pyridoxal 5'-phosphate serves as cofactor.

It carries out the reaction (1S,2R)-1-C-(indol-3-yl)glycerol 3-phosphate + L-serine = D-glyceraldehyde 3-phosphate + L-tryptophan + H2O. Its pathway is amino-acid biosynthesis; L-tryptophan biosynthesis; L-tryptophan from chorismate: step 5/5. Functionally, the beta subunit is responsible for the synthesis of L-tryptophan from indole and L-serine. This is Tryptophan synthase beta chain from Neisseria gonorrhoeae.